Reading from the N-terminus, the 630-residue chain is Elongation factor 4 (630 aa).

A disordered region spans residues 1-22; that stretch reads MTVARNRAGAGPGKGSPISSFA. The region spanning 30–211 is the tr-type G domain; it reads ARIRNFCIIA…EVVRQVPAPV (182 aa). Residues 42 to 47 and 158 to 161 contribute to the GTP site; these read DHGKST and NKID.

It belongs to the TRAFAC class translation factor GTPase superfamily. Classic translation factor GTPase family. LepA subfamily.

The protein localises to the cell membrane. It carries out the reaction GTP + H2O = GDP + phosphate + H(+). Required for accurate and efficient protein synthesis under certain stress conditions. May act as a fidelity factor of the translation reaction, by catalyzing a one-codon backward translocation of tRNAs on improperly translocated ribosomes. Back-translocation proceeds from a post-translocation (POST) complex to a pre-translocation (PRE) complex, thus giving elongation factor G a second chance to translocate the tRNAs correctly. Binds to ribosomes in a GTP-dependent manner. This Rhodococcus opacus (strain B4) protein is Elongation factor 4.